Reading from the N-terminus, the 126-residue chain is SH2 domain-containing protein 1A (126 aa).

The SH2 domain maps to 6–104 (VYHGKISRET…VTPLQYPVEK (99 aa)). Residues 67–92 (ETAPGVHKRFFRKVKNLISAFQKPDQ) form an interaction with FYN SH3 domain region. An N6-acetyllysine modification is found at Lys89. The interval 100–126 (YPVEKSSGRGPQAPTGRRDSDICLNAP) is disordered.

As to quaternary structure, interacts with CD84, CD244, LY9, SLAMF1 and FYN. Interacts with NTRK1, NTRK2 and NTRK3. T-cells.

Its subcellular location is the cytoplasm. Its function is as follows. Cytoplasmic adapter regulating receptors of the signaling lymphocytic activation molecule (SLAM) family such as SLAMF1, CD244, LY9, CD84, SLAMF6 and SLAMF7. In SLAM signaling seems to cooperate with SH2D1B/EAT-2. Initially it has been proposed that association with SLAMF1 prevents SLAMF1 binding to inhibitory effectors including INPP5D/SHIP1 and PTPN11/SHP-2. However, by simultaneous interactions, recruits FYN which subsequently phosphorylates and activates SLAMF1. Positively regulates CD244/2B4- and CD84-mediated natural killer (NK) cell functions. Can also promote CD48-, SLAMF6 -, LY9-, and SLAMF7-mediated NK cell activation. In the context of NK cell-mediated cytotoxicity enhances conjugate formation with target cells. May also regulate the activity of the neurotrophin receptors NTRK1, NTRK2 and NTRK3. This chain is SH2 domain-containing protein 1A (Sh2d1a), found in Mus musculus (Mouse).